Consider the following 366-residue polypeptide: Peptide chain release factor 2 (366 aa).

Gln251 is subject to N5-methylglutamine.

Belongs to the prokaryotic/mitochondrial release factor family. Post-translationally, methylated by PrmC. Methylation increases the termination efficiency of RF2.

It is found in the cytoplasm. Its function is as follows. Peptide chain release factor 2 directs the termination of translation in response to the peptide chain termination codons UGA and UAA. The chain is Peptide chain release factor 2 (prfB) from Listeria monocytogenes serotype 4b (strain F2365).